Reading from the N-terminus, the 174-residue chain is 3-hydroxydecanoyl-[acyl-carrier-protein] dehydratase (174 aa).

Residue His-71 is part of the active site.

The protein belongs to the thioester dehydratase family. FabA subfamily. As to quaternary structure, homodimer.

The protein resides in the cytoplasm. The catalysed reaction is a (3R)-hydroxyacyl-[ACP] = a (2E)-enoyl-[ACP] + H2O. It catalyses the reaction (3R)-hydroxydecanoyl-[ACP] = (2E)-decenoyl-[ACP] + H2O. The enzyme catalyses (2E)-decenoyl-[ACP] = (3Z)-decenoyl-[ACP]. Its pathway is lipid metabolism; fatty acid biosynthesis. In terms of biological role, necessary for the introduction of cis unsaturation into fatty acids. Catalyzes the dehydration of (3R)-3-hydroxydecanoyl-ACP to E-(2)-decenoyl-ACP and then its isomerization to Z-(3)-decenoyl-ACP. Can catalyze the dehydratase reaction for beta-hydroxyacyl-ACPs with saturated chain lengths up to 16:0, being most active on intermediate chain length. The polypeptide is 3-hydroxydecanoyl-[acyl-carrier-protein] dehydratase (Nitrobacter hamburgensis (strain DSM 10229 / NCIMB 13809 / X14)).